We begin with the raw amino-acid sequence, 519 residues long: MYLLPLPAAARVALRRLGVRGLWDRGLSTADMTKGLVLGIYAKDKDDDLPQFTSAGESFNKLVSGKLREMLNISGPPLKAGKTRTFYGLHQDFPSVVVVGLGKRSAGVDDQENWHEGKENIRAAVAAGCRQVQDLELPSVEVDPCGDAQAAAEGAVLGLYEYDDLKQKKKVAVSAKLHGSGDLEAWEKGVLFASGQNLARHLMESPANEMTPTRFAEIIEKNLKSASSKTKVHIRPKSWIEEQEMGSFLSVAKGSEEPPVFLEIHYMGSPNATEAPLVFVGKGITFDSGGISIKASANMDLMRADMGGAATICSAIVSAAKLNLPINIIGLAPLCENMPSGKANKPGDVVRARNGKTIQVDNTDAEGRLILADALCYAHTFNPKVIINAATLTGAMDVALGSGATGVFTNSSWLWNKLFEASVETGDRVWRMPLFEHYTRQVIDCQLADVNNLGKYRSAGACTAAAFLREFVTHTKWAHLDIAGVMTNKDEIPYLRKGMSGRPTRTLIEFLLRFSKDSS.

K45 is modified (N6-succinyllysine). At S54 the chain carries Phosphoserine. N6-succinyllysine is present on residues K61 and K103. 2 positions are modified to phosphoserine: S180 and S194. Zn(2+) is bound by residues L202 and M203. Residue K221 is modified to N6-acetyllysine; alternate. Position 221 is an N6-succinyllysine; alternate (K221). At S238 the chain carries Phosphoserine. The Zn(2+) site is built by K282 and D287. 4 residues coordinate substrate: K282, D287, S292, and K294. D287 contributes to the Mg(2+) binding site. K294 is an active-site residue. Zn(2+)-binding residues include R303, D305, D364, and E366. 2 residues coordinate substrate: D305 and D364. 2 residues coordinate Mg(2+): D364 and E366. Residue R368 is part of the active site. N6-acetyllysine; alternate is present on K455. K455 bears the N6-succinyllysine; alternate mark. K476 is subject to N6-succinyllysine. K489 carries the N6-acetyllysine; alternate modification. An N6-succinyllysine; alternate modification is found at K489.

This sequence belongs to the peptidase M17 family. As to quaternary structure, homohexamer. Zn(2+) is required as a cofactor. Requires Mn(2+) as cofactor.

Its subcellular location is the cytoplasm. The enzyme catalyses Release of an N-terminal amino acid, Xaa-|-Yaa-, in which Xaa is preferably Leu, but may be other amino acids including Pro although not Arg or Lys, and Yaa may be Pro. Amino acid amides and methyl esters are also readily hydrolyzed, but rates on arylamides are exceedingly low.. It catalyses the reaction an S-substituted L-cysteinylglycine + H2O = an S-substituted L-cysteine + glycine. The catalysed reaction is L-cysteinylglycine + H2O = L-cysteine + glycine. It carries out the reaction S-benzyl-L-cysteinylglycine + H2O = S-benzyl-L-cysteine + glycine. The enzyme catalyses Release of N-terminal proline from a peptide.. Cytosolic metallopeptidase that catalyzes the removal of unsubstituted N-terminal hydrophobic amino acids from various peptides. The presence of Zn(2+) ions is essential for the peptidase activity, and the association with other cofactors can modulate the substrate spectificity of the enzyme. For instance, in the presence of Mn(2+), it displays a specific Cys-Gly hydrolyzing activity of Cys-Gly-S-conjugates. Involved in the metabolism of glutathione and in the degradation of glutathione S-conjugates, which may play a role in the control of the cell redox status. The polypeptide is Cytosol aminopeptidase (Mus musculus (Mouse)).